A 677-amino-acid chain; its full sequence is Methionine--tRNA ligase (677 aa).

Residues 15–25 (PYANGSIHLGH) carry the 'HIGH' region motif. Zn(2+)-binding residues include Cys146, Cys149, Cys159, and Cys162. The 'KMSKS' region motif lies at 333–337 (KMSKS). Residue Lys336 participates in ATP binding. Residues 575–677 (DFAKVDLRVA…AGAKPGHQVK (103 aa)) form the tRNA-binding domain.

The protein belongs to the class-I aminoacyl-tRNA synthetase family. MetG type 1 subfamily. In terms of assembly, homodimer. Zn(2+) is required as a cofactor.

Its subcellular location is the cytoplasm. It catalyses the reaction tRNA(Met) + L-methionine + ATP = L-methionyl-tRNA(Met) + AMP + diphosphate. Functionally, is required not only for elongation of protein synthesis but also for the initiation of all mRNA translation through initiator tRNA(fMet) aminoacylation. This Escherichia coli (strain SE11) protein is Methionine--tRNA ligase.